A 443-amino-acid chain; its full sequence is DNA double-strand break repair protein Mre11 (443 aa).

Positions 8, 10, 49, and 84 each coordinate Mn(2+). His-85 serves as the catalytic Proton donor. Residues His-169, His-201, and His-203 each contribute to the Mn(2+) site. The tract at residues 382–429 (QEEGAEERVVEEETEKKVEEQFKGDEEADEAERRAEETEKAKSTKKAR) is disordered. Residues 395–423 (TEKKVEEQFKGDEEADEAERRAEETEKAK) show a composition bias toward basic and acidic residues.

It belongs to the MRE11/RAD32 family. As to quaternary structure, homodimer. Forms a heterotetramer composed of two Mre11 subunits and two Rad50 subunits. Requires Mn(2+) as cofactor.

Nuclease activity is regulated by Rad50. Part of the Rad50/Mre11 complex, which is involved in the early steps of DNA double-strand break (DSB) repair. The complex may facilitate opening of the processed DNA ends to aid in the recruitment of HerA and NurA. Mre11 binds to DSB ends and has both double-stranded 3'-5' exonuclease activity and single-stranded endonuclease activity. This chain is DNA double-strand break repair protein Mre11, found in Archaeoglobus fulgidus (strain ATCC 49558 / DSM 4304 / JCM 9628 / NBRC 100126 / VC-16).